The primary structure comprises 298 residues: Inosose dehydratase (298 aa).

Belongs to the IolE/MocC family. The cofactor is glutathione. Co(2+) serves as cofactor. Requires Mn(2+) as cofactor.

The catalysed reaction is scyllo-inosose = 3D-3,5/4-trihydroxycyclohexane-1,2-dione + H2O. It participates in polyol metabolism; myo-inositol degradation into acetyl-CoA; acetyl-CoA from myo-inositol: step 2/7. Functionally, catalyzes the dehydration of inosose (2-keto-myo-inositol, 2KMI or 2,4,6/3,5-pentahydroxycyclohexanone) to 3D-(3,5/4)-trihydroxycyclohexane-1,2-dione (D-2,3-diketo-4-deoxy-epi-inositol). This chain is Inosose dehydratase, found in Clostridium tetani (strain Massachusetts / E88).